A 316-amino-acid polypeptide reads, in one-letter code: Aspartate carbamoyltransferase catalytic subunit (316 aa).

Carbamoyl phosphate-binding residues include Arg66 and Thr67. Lys94 contributes to the L-aspartate binding site. 3 residues coordinate carbamoyl phosphate: Arg116, His146, and Gln149. Residues Arg179 and Arg234 each contribute to the L-aspartate site. Carbamoyl phosphate is bound by residues Gly275 and Pro276.

The protein belongs to the aspartate/ornithine carbamoyltransferase superfamily. ATCase family. Heterododecamer (2C3:3R2) of six catalytic PyrB chains organized as two trimers (C3), and six regulatory PyrI chains organized as three dimers (R2).

It carries out the reaction carbamoyl phosphate + L-aspartate = N-carbamoyl-L-aspartate + phosphate + H(+). It participates in pyrimidine metabolism; UMP biosynthesis via de novo pathway; (S)-dihydroorotate from bicarbonate: step 2/3. Functionally, catalyzes the condensation of carbamoyl phosphate and aspartate to form carbamoyl aspartate and inorganic phosphate, the committed step in the de novo pyrimidine nucleotide biosynthesis pathway. The chain is Aspartate carbamoyltransferase catalytic subunit from Nitrosomonas europaea (strain ATCC 19718 / CIP 103999 / KCTC 2705 / NBRC 14298).